A 239-amino-acid polypeptide reads, in one-letter code: Pyridoxine 5'-phosphate synthase (239 aa).

Asn-9 is a 3-amino-2-oxopropyl phosphate binding site. Residue 11–12 participates in 1-deoxy-D-xylulose 5-phosphate binding; it reads DH. 3-amino-2-oxopropyl phosphate is bound at residue Arg-20. Catalysis depends on His-45, which acts as the Proton acceptor. 2 residues coordinate 1-deoxy-D-xylulose 5-phosphate: Arg-47 and His-52. Glu-72 acts as the Proton acceptor in catalysis. Position 102 (Thr-102) interacts with 1-deoxy-D-xylulose 5-phosphate. The active-site Proton donor is His-189. Residues Gly-190 and 211-212 contribute to the 3-amino-2-oxopropyl phosphate site; that span reads GH.

It belongs to the PNP synthase family. As to quaternary structure, homooctamer; tetramer of dimers.

Its subcellular location is the cytoplasm. It carries out the reaction 3-amino-2-oxopropyl phosphate + 1-deoxy-D-xylulose 5-phosphate = pyridoxine 5'-phosphate + phosphate + 2 H2O + H(+). It participates in cofactor biosynthesis; pyridoxine 5'-phosphate biosynthesis; pyridoxine 5'-phosphate from D-erythrose 4-phosphate: step 5/5. Catalyzes the complicated ring closure reaction between the two acyclic compounds 1-deoxy-D-xylulose-5-phosphate (DXP) and 3-amino-2-oxopropyl phosphate (1-amino-acetone-3-phosphate or AAP) to form pyridoxine 5'-phosphate (PNP) and inorganic phosphate. The sequence is that of Pyridoxine 5'-phosphate synthase from Ehrlichia chaffeensis (strain ATCC CRL-10679 / Arkansas).